A 149-amino-acid polypeptide reads, in one-letter code: Inner membrane protein YfeZ (149 aa).

At 1 to 18 (MKSTEFHPVHYDAHGRLR) the chain is on the cytoplasmic side. The chain crosses the membrane as a helical span at residues 19–39 (LPLLFWLVLLLQARTWVLFVI). The Periplasmic segment spans residues 40–58 (AGASREQGTALLNLFYPDH). The helical transmembrane segment at 59–79 (DNFWLGLIPGIPAVLAFLLSG) threads the bilayer. Residues 80–89 (RRATFPRTWR) lie on the Cytoplasmic side of the membrane. The chain crosses the membrane as a helical span at residues 90–110 (VLYFLLLLAQVVLLCWQPWLW). Topologically, residues 111 to 115 (LNGES) are periplasmic. The helical transmembrane segment at 116-136 (VSGIGLALVVADIVALIWLLT) threads the bilayer. The Cytoplasmic segment spans residues 137–149 (NRRLRACFYEVKE).

The protein localises to the cell inner membrane. This Escherichia coli (strain K12) protein is Inner membrane protein YfeZ (yfeZ).